A 257-amino-acid polypeptide reads, in one-letter code: Glucose-1-phosphate cytidylyltransferase (257 aa).

Substrate contacts are provided by residues 6–10 (LAGGL), 11–13 (GTR), Lys23, Ser104, Arg109, and Gly128. 2 residues coordinate Mg(2+): Asp129 and Asp234.

This sequence belongs to the glucose-1-phosphate cytidylyltransferase family. Homohexamer. Requires Mg(2+) as cofactor.

The enzyme catalyses alpha-D-glucose 1-phosphate + CTP + H(+) = CDP-D-glucose + diphosphate. The protein operates within nucleotide-sugar biosynthesis; CDP-3,6-dideoxy-D-mannose biosynthesis; CDP-3,6-dideoxy-D-mannose from CTP and alpha-D-glucose 1-phosphate: step 1/5. It functions in the pathway bacterial outer membrane biogenesis; LPS O-antigen biosynthesis. Involved in the biosynthesis of the tyvelose, a 3,6-dideoxyhexose found in the O-antigen of the surface lipopolysaccharides. It catalyzes the transfer of a CMP moiety from CTP to glucose 1-phosphate. This chain is Glucose-1-phosphate cytidylyltransferase (rfbF), found in Salmonella typhimurium (strain LT2 / SGSC1412 / ATCC 700720).